Reading from the N-terminus, the 267-residue chain is REH2-associated factor 2 (267 aa).

As to quaternary structure, component of the REH2-associated complex (REH2C) composed of helicase REH2, associated factors H2F1 and H2F2, and mRNAs at various editing stages; the formation of the complex is RNA-independent. Interacts with various editing complexes including the RNA editing core (RECC) complex, the gRNA-binding (GRBC) complex (also known as the MRB1 complex) and the RNA editing mediator (REMC) complex.

The protein resides in the mitochondrion. Its function is as follows. May play a role in mitochondrial mRNA editing by facilitating the association of the gRNA-binding (GRBC) complex with the RNA editing core (RECC) complex. However, appears to be dispensable for mRNA editing per se. The chain is REH2-associated factor 2 from Trypanosoma brucei brucei (strain 927/4 GUTat10.1).